Consider the following 338-residue polypeptide: tRNA N6-adenosine threonylcarbamoyltransferase (338 aa).

Residues His111 and His115 each coordinate Fe cation. Residues 134–138 (LVSGG), Asp167, Gly180, and Asn272 each bind substrate. Residue Asp300 participates in Fe cation binding.

The protein belongs to the KAE1 / TsaD family. Requires Fe(2+) as cofactor.

It is found in the cytoplasm. The enzyme catalyses L-threonylcarbamoyladenylate + adenosine(37) in tRNA = N(6)-L-threonylcarbamoyladenosine(37) in tRNA + AMP + H(+). Its function is as follows. Required for the formation of a threonylcarbamoyl group on adenosine at position 37 (t(6)A37) in tRNAs that read codons beginning with adenine. Is involved in the transfer of the threonylcarbamoyl moiety of threonylcarbamoyl-AMP (TC-AMP) to the N6 group of A37, together with TsaE and TsaB. TsaD likely plays a direct catalytic role in this reaction. The protein is tRNA N6-adenosine threonylcarbamoyltransferase of Aliivibrio salmonicida (strain LFI1238) (Vibrio salmonicida (strain LFI1238)).